The following is a 69-amino-acid chain: Conotoxin Fr3.1 (69 aa).

The first 20 residues, 1–20 (MLKTGVLLLIFLVLFPLATL), serve as a signal peptide directing secretion. Residues 21-51 (QDADQPVERNVENKQDLNLDKRRGMKLLAQR) constitute a propeptide that is removed on maturation. Glutamine 52 is subject to Pyrrolidone carboxylic acid. Glutamate 54 carries the post-translational modification 4-carboxyglutamate. Proline 58 carries the post-translational modification 4-hydroxyproline.

This sequence belongs to the conotoxin M superfamily. In terms of tissue distribution, expressed by the venom duct.

It localises to the secreted. In terms of biological role, probable toxin. The protein is Conotoxin Fr3.1 of Conus frigidus (Frigid cone).